The primary structure comprises 489 residues: Glycogen synthase (489 aa).

Position 17 (Lys17) interacts with ADP-alpha-D-glucose.

This sequence belongs to the glycosyltransferase 1 family. Bacterial/plant glycogen synthase subfamily.

The catalysed reaction is [(1-&gt;4)-alpha-D-glucosyl](n) + ADP-alpha-D-glucose = [(1-&gt;4)-alpha-D-glucosyl](n+1) + ADP + H(+). Its pathway is glycan biosynthesis; glycogen biosynthesis. Its function is as follows. Synthesizes alpha-1,4-glucan chains using ADP-glucose. The sequence is that of Glycogen synthase from Nitratidesulfovibrio vulgaris (strain ATCC 29579 / DSM 644 / CCUG 34227 / NCIMB 8303 / VKM B-1760 / Hildenborough) (Desulfovibrio vulgaris).